We begin with the raw amino-acid sequence, 298 residues long: NAD kinase (298 aa).

Residue Asp-80 is the Proton acceptor of the active site. NAD(+) is bound by residues 80 to 81, 154 to 155, Arg-182, Asp-184, 195 to 200, Ala-219, and Gln-253; these read DG, ND, and TAYALS.

This sequence belongs to the NAD kinase family. A divalent metal cation serves as cofactor.

The protein resides in the cytoplasm. It carries out the reaction NAD(+) + ATP = ADP + NADP(+) + H(+). Functionally, involved in the regulation of the intracellular balance of NAD and NADP, and is a key enzyme in the biosynthesis of NADP. Catalyzes specifically the phosphorylation on 2'-hydroxyl of the adenosine moiety of NAD to yield NADP. In Delftia acidovorans (strain DSM 14801 / SPH-1), this protein is NAD kinase.